The sequence spans 173 residues: RxLR effector protein PITG_10232 (173 aa).

The first 24 residues, Met-1–Ala-24, serve as a signal peptide directing secretion. The tract at residues Ser-25–Asp-64 is disordered. Over residues Arg-37–Arg-49 the composition is skewed to basic and acidic residues. Residues Arg-46–Arg-65 carry the RxLR-dEER motif.

The protein belongs to the RxLR effector family.

The protein localises to the secreted. It is found in the host nucleus. Its subcellular location is the host cytoplasm. Functionally, effector that leads to host programmed cell death. In Phytophthora infestans (strain T30-4) (Potato late blight agent), this protein is RxLR effector protein PITG_10232.